The primary structure comprises 411 residues: Basic leucine zipper 10 (411 aa).

Disordered stretches follow at residues 1–36 (MNSI…DEVS), 76–99 (SLPS…DSGN), 140–251 (SVKP…NDLK), and 362–411 (NNFA…KCVD). Residues 24–36 (PDSSKPVTADEVS) show a composition bias toward polar residues. The span at 89 to 98 (DSRFRDRDSG) shows a compositional bias: basic and acidic residues. Composition is skewed to polar residues over residues 146–173 (STSS…TSSL) and 183–193 (SMKQVTSGSSR). Ser-196 carries the phosphoserine modification. Residues 196-206 (SDDEDLDEENE) are compositionally biased toward acidic residues. Residues 215-278 (DVKKSRRMLS…DEAAVGNRIL (64 aa)) enclose the bZIP domain. The tract at residues 217-236 (KKSRRMLSNRESARRSRRRK) is basic motif. A Nuclear localization signal motif is present at residues 219-226 (SRRMLSNR). Residues 243–257 (LETQVNDLKGEHSSL) are leucine-zipper. Positions 368 to 390 (PSQTSSPLQRIRNGQNHHVTPSA) are enriched in polar residues.

The protein belongs to the bZIP family. As to quaternary structure, forms a heterodimer with BZIP1, BZIP2, BZIP9, BZIP11, BZIP44, BZIP53 and BZIP63. Interacts with ABI3 and forms a complex made of ABI3, BZIP53 and BZIP10. Binding with LSD1 leads to cytoplasmic retention. In terms of tissue distribution, expressed in roots, shoots, stems, young leaves, trichomes, hydathodes, siliques, seeds, and flowers, mostly in vascular tissues.

Its subcellular location is the nucleus. The protein resides in the cytoplasm. Functionally, transcription factor that binds to the C-box-like motif (5'-TGCTGACGTCA-3') and G-box-like motif (5'-CCACGTGGCC-3'), ABRE elements, of gene promoters. Binds to the 5'-ACGT-3' motif of seed storage protein (SSP) encoding gene promoters (e.g. At2S and CRU3) and promotes their expression in seeds when in complex with ABI3 and BZIP53. Involved in the defense responses to the biotrophic pathogen Hyaloperonospora parasitica and oxidative stress responses; mediates positively cell death. Promotes BZIP53-mediated response to hypoosmolarity stress that leads to POX1/PRODH1 accumulation. The chain is Basic leucine zipper 10 (BZIP10) from Arabidopsis thaliana (Mouse-ear cress).